We begin with the raw amino-acid sequence, 183 residues long: MQQWVDCEFTGRDFRDEDLSRLHTERAMFSECDFSGVNLAESQHRGSAFRNCTFERTTLWHSTFAQCSMLGSVFVACRLRPLTLDDVDFTLAVLGGNDLRGLNLTGCRLRETSLVDTDLRKCVLRGADLSGARTTGARLDDADLRGATVDPVLWRTASLVGARVDVDQAVAFAAAHGLCLAGG.

Residues 113–147 (SLVDTDLRKCVLRGADLSGARTTGARLDDADLRGA) enclose the Pentapeptide repeat domain.

This sequence belongs to the pentapeptide repeat protein family. As to quaternary structure, homodimer. Probably interacts with DNA gyrase.

In terms of biological role, might be involved in fluoroquinolone resistance. Inhibits ATP-independent DNA relaxation, ATP-dependent DNA supercoiling and ATP-dependent decatenation by endogenous gyrase, 50% inhibition occurs at 2 uM; inhibition is abolished if GyrA is mutated (Asp-87 to Gly or His). Also inhibits fluoroquinolone-promoted dsDNA cleavage. Increases fluoroquinolone (ciprofloxacin or moxifloxacin) inhibition of gyrase supercoiling activity in a concentration-dependent manner. Inhibits DNA relaxation and supercoiling by E.coli gyrase. Forms a structure that exhibits size, shape and electrostatic similarity to B-form DNA; it may bind to DNA gyrase which is postulated to protect it from fluoroquinolones. This Mycobacterium tuberculosis (strain ATCC 25618 / H37Rv) protein is Pentapeptide repeat protein MfpA.